A 110-amino-acid chain; its full sequence is UPF0060 membrane protein RPA3838 (110 aa).

Helical transmembrane passes span 4–24, 31–51, 59–79, and 85–105; these read LLTF…FWAW, PLWL…LTLA, AYAA…WAIE, and QWDV…LFGP.

Belongs to the UPF0060 family.

The protein localises to the cell inner membrane. This chain is UPF0060 membrane protein RPA3838, found in Rhodopseudomonas palustris (strain ATCC BAA-98 / CGA009).